Reading from the N-terminus, the 87-residue chain is U9-ctenitoxin-Pn1a (87 aa).

The signal sequence occupies residues methionine 1 to alanine 22. The propeptide occupies glutamate 23–alanine 37. 4 cysteine pairs are disulfide-bonded: cysteine 40–cysteine 54, cysteine 47–cysteine 64, cysteine 53–cysteine 73, and cysteine 66–cysteine 71. Residues lysine 75–arginine 87 constitute a propeptide that is removed on maturation.

It belongs to the neurotoxin 02 (plectoxin) family. 01 (Tx3) subfamily. Expressed by the venom gland.

Its subcellular location is the secreted. Its function is as follows. Antagonist of L-type calcium channels (Cav1/CACNA1). This chain is U9-ctenitoxin-Pn1a, found in Phoneutria nigriventer (Brazilian armed spider).